The primary structure comprises 580 residues: Proline--tRNA ligase (580 aa).

Belongs to the class-II aminoacyl-tRNA synthetase family. ProS type 1 subfamily. As to quaternary structure, homodimer.

The protein resides in the cytoplasm. It carries out the reaction tRNA(Pro) + L-proline + ATP = L-prolyl-tRNA(Pro) + AMP + diphosphate. Its function is as follows. Catalyzes the attachment of proline to tRNA(Pro) in a two-step reaction: proline is first activated by ATP to form Pro-AMP and then transferred to the acceptor end of tRNA(Pro). As ProRS can inadvertently accommodate and process non-cognate amino acids such as alanine and cysteine, to avoid such errors it has two additional distinct editing activities against alanine. One activity is designated as 'pretransfer' editing and involves the tRNA(Pro)-independent hydrolysis of activated Ala-AMP. The other activity is designated 'posttransfer' editing and involves deacylation of mischarged Ala-tRNA(Pro). The misacylated Cys-tRNA(Pro) is not edited by ProRS. This is Proline--tRNA ligase from Polynucleobacter necessarius subsp. necessarius (strain STIR1).